Here is a 595-residue protein sequence, read N- to C-terminus: Elongation factor 4 (595 aa).

Positions 1-183 (MNVRNFSIIA…AIVERIPPPP (183 aa)) constitute a tr-type G domain. GTP contacts are provided by residues 13–18 (DHGKST) and 130–133 (NKID).

This sequence belongs to the TRAFAC class translation factor GTPase superfamily. Classic translation factor GTPase family. LepA subfamily.

Its subcellular location is the cell membrane. It carries out the reaction GTP + H2O = GDP + phosphate + H(+). Its function is as follows. Required for accurate and efficient protein synthesis under certain stress conditions. May act as a fidelity factor of the translation reaction, by catalyzing a one-codon backward translocation of tRNAs on improperly translocated ribosomes. Back-translocation proceeds from a post-translocation (POST) complex to a pre-translocation (PRE) complex, thus giving elongation factor G a second chance to translocate the tRNAs correctly. Binds to ribosomes in a GTP-dependent manner. The chain is Elongation factor 4 from Deinococcus geothermalis (strain DSM 11300 / CIP 105573 / AG-3a).